Here is a 648-residue protein sequence, read N- to C-terminus: 1-deoxy-D-xylulose-5-phosphate synthase (648 aa).

Thiamine diphosphate contacts are provided by residues His-74 and 115-117 (GHA). Asp-146 contributes to the Mg(2+) binding site. Residues 147-148 (GA), Asn-176, Tyr-292, and Glu-375 each bind thiamine diphosphate. Residue Asn-176 participates in Mg(2+) binding.

This sequence belongs to the transketolase family. DXPS subfamily. Homodimer. The cofactor is Mg(2+). It depends on thiamine diphosphate as a cofactor.

The catalysed reaction is D-glyceraldehyde 3-phosphate + pyruvate + H(+) = 1-deoxy-D-xylulose 5-phosphate + CO2. The protein operates within metabolic intermediate biosynthesis; 1-deoxy-D-xylulose 5-phosphate biosynthesis; 1-deoxy-D-xylulose 5-phosphate from D-glyceraldehyde 3-phosphate and pyruvate: step 1/1. In terms of biological role, catalyzes the acyloin condensation reaction between C atoms 2 and 3 of pyruvate and glyceraldehyde 3-phosphate to yield 1-deoxy-D-xylulose-5-phosphate (DXP). The polypeptide is 1-deoxy-D-xylulose-5-phosphate synthase (Synechococcus sp. (strain JA-2-3B'a(2-13)) (Cyanobacteria bacterium Yellowstone B-Prime)).